Reading from the N-terminus, the 333-residue chain is 4-hydroxyproline epimerase (333 aa).

The Proton acceptor role is filled by cysteine 90. Substrate-binding positions include 91–92 and aspartate 249; that span reads GH. The active-site Proton donor is the cysteine 253. A substrate-binding site is contributed by 254–255; sequence GT.

Belongs to the proline racemase family. In terms of assembly, homodimer.

The catalysed reaction is trans-4-hydroxy-L-proline = cis-4-hydroxy-D-proline. In terms of biological role, allows intracellular utilization of 4-hydroxyproline, one of the major constituents of host collagen, by converting 4-hydroxy-L-proline to 4-hydroxy-D-proline, which can be further metabolized by intracellular 4-hydroxy-D-proline oxidases. Strong B-cell mitogen. Plays an important role in the regulation of intra- and extracellular amino acid pools, allowing the bacterium to profit from host precursors and enzymatic pathways. This chain is 4-hydroxyproline epimerase, found in Brucella abortus (strain S19).